Consider the following 484-residue polypeptide: 6-phosphogluconate dehydrogenase, decarboxylating (484 aa).

NADP(+)-binding positions include 11-16 (GLAVMG), 34-36 (NRT), 76-78 (VRA), and Asn-104. Substrate contacts are provided by residues Asn-104 and 130–132 (SGG). Lys-185 (proton acceptor) is an active-site residue. A substrate-binding site is contributed by 188–189 (HN). Glu-192 acts as the Proton donor in catalysis. Substrate is bound by residues Tyr-193, Lys-262, Arg-289, Arg-447, and His-453.

The protein belongs to the 6-phosphogluconate dehydrogenase family. In terms of assembly, homodimer.

It catalyses the reaction 6-phospho-D-gluconate + NADP(+) = D-ribulose 5-phosphate + CO2 + NADPH. The protein operates within carbohydrate degradation; pentose phosphate pathway; D-ribulose 5-phosphate from D-glucose 6-phosphate (oxidative stage): step 3/3. In terms of biological role, catalyzes the oxidative decarboxylation of 6-phosphogluconate to ribulose 5-phosphate and CO(2), with concomitant reduction of NADP to NADPH. This Haemophilus ducreyi (strain 35000HP / ATCC 700724) protein is 6-phosphogluconate dehydrogenase, decarboxylating (gnd).